The primary structure comprises 391 residues: Galactokinase (391 aa).

Residue 34–37 coordinates substrate; the sequence is EHTD. 121 to 127 contributes to the ATP binding site; that stretch reads GAGLSSS. 2 residues coordinate Mg(2+): Ser-127 and Glu-159. The active-site Proton acceptor is the Asp-171. Tyr-220 contributes to the substrate binding site.

This sequence belongs to the GHMP kinase family. GalK subfamily.

It is found in the cytoplasm. It carries out the reaction alpha-D-galactose + ATP = alpha-D-galactose 1-phosphate + ADP + H(+). It functions in the pathway carbohydrate metabolism; galactose metabolism. Catalyzes the transfer of the gamma-phosphate of ATP to D-galactose to form alpha-D-galactose-1-phosphate (Gal-1-P). This is Galactokinase from Roseiflexus sp. (strain RS-1).